A 72-amino-acid chain; its full sequence is Translation initiation factor IF-1 (72 aa).

The region spanning 1–72 (MAKDDVIEVE…TRGRITYRFK (72 aa)) is the S1-like domain.

It belongs to the IF-1 family. In terms of assembly, component of the 30S ribosomal translation pre-initiation complex which assembles on the 30S ribosome in the order IF-2 and IF-3, IF-1 and N-formylmethionyl-tRNA(fMet); mRNA recruitment can occur at any time during PIC assembly.

It is found in the cytoplasm. One of the essential components for the initiation of protein synthesis. Stabilizes the binding of IF-2 and IF-3 on the 30S subunit to which N-formylmethionyl-tRNA(fMet) subsequently binds. Helps modulate mRNA selection, yielding the 30S pre-initiation complex (PIC). Upon addition of the 50S ribosomal subunit IF-1, IF-2 and IF-3 are released leaving the mature 70S translation initiation complex. The sequence is that of Translation initiation factor IF-1 from Streptococcus pneumoniae serotype 2 (strain D39 / NCTC 7466).